Here is an 809-residue protein sequence, read N- to C-terminus: Transitional endoplasmic reticulum ATPase homolog 1 (809 aa).

Residues 1-21 (MASVPTHQSEKEKKNDELSTA) form a disordered region. Residues 8–21 (QSEKEKKNDELSTA) show a composition bias toward basic and acidic residues. ATP contacts are provided by residues 253–259 (PGTGKTL), N354, H390, and 527–532 (GCGKTL). A disordered region spans residues 779-809 (FGNNFKFPGEQRGSDAPSAPVPAQDDDDLYN). The tract at residues 803 to 809 (DDDDLYN) is interaction with ufd-2.

This sequence belongs to the AAA ATPase family. CDC48 subfamily. In terms of assembly, homohexamer; oligomerization is ATP-independent. Forms a ring-shaped particle of 18.3 nm diameter, that displays 6-fold radial symmetry. Interacts with cdc-48.2 and thus may form heterohexamers. Forms a complex composed of cdc-48.1, him-6 and crp-1; within the complex, interacts with helicase him-6 and GTPase crp-1. Forms a complex composed of deubiquitinating enzyme atx-3, adapter ubxn-5 and cdc-48.1; within the complex, interacts (via N-terminus) with ubxn-5 and with atx-3. Forms a complex composed of deubiquitinating enzyme atx-3, E4 ubiquitin-protein ligase ufd-2 and cdc-48.1; within the complex, interacts with atx-3 and (via DDDLYN motif) with ufd-2. Interacts (via N-terminus) with atx-3 (via RRDR motif); the interaction is not required for atx-3 enzymatic activity. Forms a complex composed of cdc-48.1, myosin chaperone unc-45, ubiquitin-protein ligases ufd-2 and chn-1; within the complex, interacts (via DDDLYN motif) with ufd-2 and targets myosin chaperone unc-45 for proteasomal degradation. Forms a complex composed of ubxn-3, ufd-1, npl-4.1 and cdc-48.1; within the complex, interacts (via N-terminus) with ubxn-3 (via FPK motif) and with ufd-1. Forms a complex composed of ubxn-3, cdc-48.1 and/or cdc-48.2 and substrate cdt-1. Interacts (via N-terminus) with ubxn-1. Interacts (via N-terminus) with ubxn-2. Interacts (via N-terminus) with ubxn-4. Interacts with ubxn-6. Interacts with ufd-3. Does not interact with air-2. As to expression, expressed in germ cells and spermatheca. Expressed in body wall muscles.

It is found in the cytoplasm. It localises to the perinuclear region. It carries out the reaction ATP + H2O = ADP + phosphate + H(+). The first ATP-binding region has low ATPase activity. The second ATP-binding region is responsible for ATPase activity. ATP binding to the first ATP-binding region induces intrinsic activity of the second ATP-binding region. While ATP binding to the first ATP-binding region appears to prevent ATP hydrolysis by the second ATP-binding region, ADP-binding to first region promotes the coordinate and cooperative ATPase cycle of the second ATP-binding region. ATP binding to the first ATP-binding region induces a conformational change, promoting the rotation of the first ATP-binding region relative to the second ATP-binding region in the hexamer. Inhibited by N-ethylmaleimide (NEM). Its function is as follows. ATP-dependent chaperone which probably uses the energy provided by ATP hydrolysis to generate mechanical force to unfold substrate proteins, disassemble protein complexes, and disaggregate protein aggregates. Can also prevent aggregation of unfolded proteins also in an ATP-independent manner. Targets polyubiquitinated proteins for proteasomal degradation by binding to 'Lys-48'-linked polyubiquitin chains. Involved in the cytoplasmic elimination of misfolded proteins exported from the ER. This pathway, known as ERAD, prevents the activation of the unfolded protein response (UPR) caused by the accumulation of misfolded proteins in the ER. In association with helicase him-6 and GTPase crp-1, regulates the unfolded protein response (UPR) following ER stress, probably independently of the ERAD pathway. Together with udf-2 and chn-1, regulates myosin assembly in body wall muscles by targeting myosin chaperone unc-45 for proteasomal degradation. Together with the ufd-1-npl-4 complex, controls the switch from spermatogenesis to oogenesis by regulating E3 ligase cul-2 complex-mediated tra-1 proteasomal degradation. During oocyte meiosis and together with cdc-48.2, required for chromosome condensation at the diakinesis phase in prophase I and for progression of metaphase I. During the first embryonic cell division, regulates DNA replication and thus chromosome segregation and decondensation, and nuclear envelope re-assembly. In S phase and in association with ufd-1, npl-4.1 and/or npl-4.2 and ubxn-3, ensures the degradation of DNA licensing factor cdt-1 after the initiation of DNA replication and thus the disassembly of the DNA replication CMG helicase complex by promoting the dissociation from chromatin of several of its components including cdc-45 and sld-5. Regulates ubxn-3 nuclear localization during S phase. During the first embryonic cell divisions and together with cdc-48.2, regulates the re-assembly of the nuclear envelope after mitosis possibly by inactivating kinase air-2, a component of the chromosomal passenger complex (CPC). However, in another study, cdc-48.1 does not appear to be implicated in the regulation of air-2. The polypeptide is Transitional endoplasmic reticulum ATPase homolog 1 (Caenorhabditis elegans).